The primary structure comprises 413 residues: Probable protein phosphatase 2C 78 (413 aa).

The tract at residues 21–40 is disordered; sequence KKATTTTRRRERSSSQAARR. A PPM-type phosphatase domain is found at 111–409; that stretch reads KYGVASVCGR…DNVSVVVVDL (299 aa). The Mn(2+) site is built by D153, G154, D327, and D400.

The protein belongs to the PP2C family. It depends on Mg(2+) as a cofactor. Mn(2+) serves as cofactor.

It localises to the golgi apparatus. Its subcellular location is the nucleus. It carries out the reaction O-phospho-L-seryl-[protein] + H2O = L-seryl-[protein] + phosphate. The enzyme catalyses O-phospho-L-threonyl-[protein] + H2O = L-threonyl-[protein] + phosphate. In terms of biological role, acts as a negative regulator of abscisic acid (ABA) signaling for stomatal closure in leaves, and controls water loss during leaf senescence. Activated by the NAC029/NAP transcription factor during ABA signaling in senescing leaves. Functions as a negative regulator of osmotic stress and ABA signaling. Acts as a negative regulator of response to drought. In Arabidopsis thaliana (Mouse-ear cress), this protein is Probable protein phosphatase 2C 78.